The primary structure comprises 195 residues: Achaete-scute homolog 1b (195 aa).

The bHLH domain occupies methionine 66 to leucine 118. Positions valine 141–glutamate 164 are disordered.

In terms of assembly, efficient DNA binding requires dimerization with another bHLH protein. In the 24 hours embryo, expressed in hindbrain close to the anterior and posterior boundaries of rhombomeres 2-6 and in ventral cells close to the floor plate of most rhombomeres. Also expressed in the telencephalon, diencephalon, tegmentum and spinal cord at sites distinct from those expressing ascl1a. Not expressed in the adenohypophysis.

Its subcellular location is the nucleus. Functionally, transcriptional regulator. May mediate transcription activation by binding to the E box-containing promoter. Involved in neurogenesis. Involved in maintaining rhombomere boundaries in the hindbrain, probably via up-regulation of delta expression. May mediate transcription activation by binding to the E box-containing promoter. This is Achaete-scute homolog 1b from Danio rerio (Zebrafish).